We begin with the raw amino-acid sequence, 137 residues long: Ribosome-binding factor A (137 aa).

Belongs to the RbfA family. Monomer. Binds 30S ribosomal subunits, but not 50S ribosomal subunits or 70S ribosomes.

The protein resides in the cytoplasm. Functionally, one of several proteins that assist in the late maturation steps of the functional core of the 30S ribosomal subunit. Associates with free 30S ribosomal subunits (but not with 30S subunits that are part of 70S ribosomes or polysomes). Required for efficient processing of 16S rRNA. May interact with the 5'-terminal helix region of 16S rRNA. This Synechococcus sp. (strain ATCC 27144 / PCC 6301 / SAUG 1402/1) (Anacystis nidulans) protein is Ribosome-binding factor A.